The primary structure comprises 250 residues: Virulence plasmid protein pGP6-D-related protein (250 aa).

This sequence belongs to the UPF0137 (pGP6-D) family.

The sequence is that of Virulence plasmid protein pGP6-D-related protein from Chlamydia pneumoniae (Chlamydophila pneumoniae).